The chain runs to 776 residues: Transcription factor MYB3R-1 (776 aa).

The interval 1–41 (MKREMKAPTTPLESLQGDLKGKQGRTSGPARRSTKGQWTPE) is disordered. HTH myb-type domains lie at 30–81 (ARRS…QKVL), 82–137 (NPEL…NPGI), and 138–188 (NKNA…KKKL). 3 consecutive DNA-binding regions (H-T-H motif) follow at residues 58 to 81 (WKKI…QKVL), 110 to 133 (WSTI…HNHL), and 161 to 184 (WAEL…NSSV). Disordered regions lie at residues 217–253 (SSWM…STND), 364–384 (FQSS…TDPE), and 401–435 (DNMK…AETH). Polar residues-rich tracts occupy residues 240–253 (CSQA…STND), 364–380 (FQSS…SNSD), and 423–432 (GKGSLCSQAA). A Nuclear localization signal motif is present at residues 648–655 (KKRHRDLL).

In terms of assembly, component of a DREAM-like complex which modulates a variety of developmentally regulated genes and of the mitotic genes in proliferating and differentiated cells. In terms of tissue distribution, expressed ubiquitously at low levels. Expressed in roots, cotyledons, flowers and leaves, especially in vascular tissues.

Its subcellular location is the nucleus. Its function is as follows. Transcription factor that binds 5'-AACGG-3' motifs in gene promoters. Transcription activator involved in the regulation of cytokinesis, probably via the activation of several G2/M phase-specific genes transcription (e.g. KNOLLE). Transcription repressor that regulates organ growth. Binds to the promoters of G2/M-specific genes and to E2F target genes to prevent their expression in post-mitotic cells and to restrict the time window of their expression in proliferating cells. Required for the maintenance of diploidy. In Arabidopsis thaliana (Mouse-ear cress), this protein is Transcription factor MYB3R-1.